A 98-amino-acid chain; its full sequence is Small ribosomal subunit protein bS6 (98 aa).

Belongs to the bacterial ribosomal protein bS6 family.

Its function is as follows. Binds together with bS18 to 16S ribosomal RNA. In Limosilactobacillus reuteri (strain DSM 20016) (Lactobacillus reuteri), this protein is Small ribosomal subunit protein bS6.